We begin with the raw amino-acid sequence, 90 residues long: UPF0367 protein SYNPCC7002_A0153 (90 aa).

The protein belongs to the UPF0367 family.

This is UPF0367 protein SYNPCC7002_A0153 from Picosynechococcus sp. (strain ATCC 27264 / PCC 7002 / PR-6) (Agmenellum quadruplicatum).